We begin with the raw amino-acid sequence, 902 residues long: Proline-rich transmembrane protein 4 (902 aa).

The signal sequence occupies residues methionine 1–alanine 18. 2 disordered regions span residues phenylalanine 120–arginine 149 and proline 262–proline 337. Residues serine 125–threonine 139 show a composition bias toward low complexity. Over residues serine 271 to serine 301 the composition is skewed to polar residues. Transmembrane regions (helical) follow at residues alanine 371–tryptophan 391, cysteine 393–threonine 413, alanine 431–leucine 451, proline 465–glycine 485, and glycine 501–glycine 521. Serine 642 is modified (phosphoserine). Disordered stretches follow at residues glycine 700 to phenylalanine 721, lysine 771 to glycine 811, and valine 836 to leucine 872. Polar residues predominate over residues alanine 703 to cysteine 717. The segment covering serine 786–tryptophan 798 has biased composition (pro residues). Composition is skewed to low complexity over residues proline 799–glycine 811 and serine 843–serine 854.

The protein resides in the membrane. This Rattus norvegicus (Rat) protein is Proline-rich transmembrane protein 4 (Prrt4).